The sequence spans 661 residues: Kininogen-1 (661 aa).

An N-terminal signal peptide occupies residues 1-20 (MKLITTLLLCSGLLLTLTQG). A Cystatin kininogen-type 1 domain is found at 28 to 131 (CNDEAVFQAV…TQTCKIAPSK (104 aa)). Disulfide bonds link cysteine 28-cysteine 631, cysteine 83-cysteine 94, cysteine 107-cysteine 125, cysteine 141-cysteine 144, cysteine 205-cysteine 217, cysteine 228-cysteine 247, cysteine 263-cysteine 266, cysteine 327-cysteine 339, and cysteine 350-cysteine 369. Asparagine 82 carries N-linked (GlcNAc...) asparagine glycosylation. The Cystatin kininogen-type 2 domain maps to 150–253 (TDSPDLEPVL…SQSCTLYSGD (104 aa)). Asparagine 168 and asparagine 204 each carry an N-linked (GlcNAc...) asparagine glycan. N-linked (GlcNAc...) asparagine glycosylation is present at asparagine 242. The 104-residue stretch at 272–375 (VDSPELKEVL…TVKCQALDMT (104 aa)) folds into the Cystatin kininogen-type 3 domain. Phosphoserine is present on serine 331. Disordered stretches follow at residues 405 to 471 (YIAR…LGHG), 485 to 583 (DGDD…FQDS), and 626 to 661 (ATSP…DALS). Basic residues-rich tracts occupy residues 434–471 (KANK…LGHG) and 492–526 (TVGH…HGKH). Residues 541–555 (TESLASSSEYSTTST) show a composition bias toward low complexity. Over residues 650 to 661 (EFSDFDLLDALS) the composition is skewed to acidic residues.

As to quaternary structure, isoform LMW interacts with CRISP3. In terms of processing, bradykinin is released from kininogen by plasma kallikrein. Phosphorylated by FAM20C in the extracellular medium. Post-translationally, bradykinin is inactivated by ACE, which removes the dipeptide Arg-Phe from its C-terminus. Plasma.

The protein resides in the secreted. Its subcellular location is the extracellular space. Functionally, kininogens are inhibitors of thiol proteases. HMW-kininogen plays an important role in blood coagulation by helping to position optimally prekallikrein and factor XI next to factor XII; HMW-kininogen inhibits the thrombin- and plasmin-induced aggregation of thrombocytes. LMW-kininogen inhibits the aggregation of thrombocytes. LMW-kininogen is in contrast to HMW-kininogen not involved in blood clotting. Its function is as follows. The active peptide bradykinin is a potent vasodilatator that is released from HMW-kininogen shows a variety of physiological effects: (A) influence in smooth muscle contraction, (B) induction of hypotension, (C) natriuresis and diuresis, (D) decrease in blood glucose level, (E) it is a mediator of inflammation and causes (E1) increase in vascular permeability, (E2) stimulation of nociceptors (4E3) release of other mediators of inflammation (e.g. prostaglandins), (F) it has a cardioprotective effect (directly via bradykinin action, indirectly via endothelium-derived relaxing factor action). The sequence is that of Kininogen-1 (Kng1) from Mus musculus (Mouse).